Reading from the N-terminus, the 205-residue chain is Tic20 family protein Ycf60 (205 aa).

The next 5 helical transmembrane spans lie at 5–25 (LFVNILFGTACIIIFGLVILI), 54–74 (AISCLIYFLPLLEGIAQFGIV), 102–122 (LIGFCIFITLYLIFVRGIIQI), 130–150 (IVQALLLYLLDSVIGTVLTSL), and 163–183 (LADTLLLITFMISIYAGTDAL).

This sequence belongs to the Tic20 family.

It is found in the plastid. Its subcellular location is the chloroplast membrane. This Cyanidium caldarium (Red alga) protein is Tic20 family protein Ycf60 (ycf60).